The chain runs to 255 residues: Putative expansin-A27 (255 aa).

A signal peptide spans 1–24 (MGAMAENLLVLCTILAARMALAAA). Positions 45–160 (GGACGYGNLY…RRVRCWRRGG (116 aa)) constitute an Expansin-like EG45 domain. In terms of domain architecture, Expansin-like CBD spans 170–249 (HFELVLVANV…GWKFGQTFST (80 aa)).

This sequence belongs to the expansin family. Expansin A subfamily.

The protein localises to the secreted. Its subcellular location is the cell wall. It localises to the membrane. Functionally, may cause loosening and extension of plant cell walls by disrupting non-covalent bonding between cellulose microfibrils and matrix glucans. No enzymatic activity has been found. May be required for rapid internodal elongation in deepwater rice during submergence. This Oryza sativa subsp. japonica (Rice) protein is Putative expansin-A27 (EXPA27).